The sequence spans 231 residues: Putative cobalt transport protein CbiM 1 (231 aa).

6 helical membrane passes run 9–29, 41–61, 74–94, 107–127, 135–155, and 181–201; these read PGPWWQIWWILSIPVFAYGIF, VLPLIAVSGAVIFVLSSLKLP, GMAVILFGPAITSVLSAIVLL, TFGANLMSMGIIGPFVAYAIY, VNFYVSAFVTATLADWVTYVV, and VFAITQIPLAILEASLITLLF.

This sequence belongs to the CbiM family. Forms an energy-coupling factor (ECF) transporter complex composed of an ATP-binding protein (A component, CbiO), a transmembrane protein (T component, CbiQ) and 2 possible substrate-capture proteins (S components, CbiM and CbiN) of unknown stoichimetry.

It is found in the cell membrane. It participates in cofactor biosynthesis; adenosylcobalamin biosynthesis. In terms of biological role, part of the energy-coupling factor (ECF) transporter complex CbiMNOQ involved in cobalt import. In Methanosarcina barkeri (strain Fusaro / DSM 804), this protein is Putative cobalt transport protein CbiM 1.